Reading from the N-terminus, the 359-residue chain is Ribosomal RNA large subunit methyltransferase M (359 aa).

Residues serine 186, 219–222 (CPGG), aspartate 238, aspartate 258, and aspartate 275 each bind S-adenosyl-L-methionine. The active-site Proton acceptor is lysine 304.

This sequence belongs to the class I-like SAM-binding methyltransferase superfamily. RNA methyltransferase RlmE family. RlmM subfamily. In terms of assembly, monomer.

It localises to the cytoplasm. It catalyses the reaction cytidine(2498) in 23S rRNA + S-adenosyl-L-methionine = 2'-O-methylcytidine(2498) in 23S rRNA + S-adenosyl-L-homocysteine + H(+). Catalyzes the 2'-O-methylation at nucleotide C2498 in 23S rRNA. The protein is Ribosomal RNA large subunit methyltransferase M of Aliivibrio fischeri (strain MJ11) (Vibrio fischeri).